A 144-amino-acid chain; its full sequence is Large ribosomal subunit protein uL16m (144 aa).

This sequence belongs to the universal ribosomal protein uL16 family.

The protein localises to the mitochondrion. In Dictyostelium discoideum (Social amoeba), this protein is Large ribosomal subunit protein uL16m (mrpl16).